The chain runs to 273 residues: 2,3,4,5-tetrahydropyridine-2,6-dicarboxylate N-succinyltransferase (273 aa).

The substrate site is built by Arg-104 and Asp-141.

The protein belongs to the transferase hexapeptide repeat family. Homotrimer.

It localises to the cytoplasm. It carries out the reaction (S)-2,3,4,5-tetrahydrodipicolinate + succinyl-CoA + H2O = (S)-2-succinylamino-6-oxoheptanedioate + CoA. It participates in amino-acid biosynthesis; L-lysine biosynthesis via DAP pathway; LL-2,6-diaminopimelate from (S)-tetrahydrodipicolinate (succinylase route): step 1/3. The sequence is that of 2,3,4,5-tetrahydropyridine-2,6-dicarboxylate N-succinyltransferase from Chromobacterium violaceum (strain ATCC 12472 / DSM 30191 / JCM 1249 / CCUG 213 / NBRC 12614 / NCIMB 9131 / NCTC 9757 / MK).